We begin with the raw amino-acid sequence, 158 residues long: MRMEAQVVAVSPHGVVLPLGVAKVMEVHPLGAVLAAVPQLGAAKVLVLLLLGVVLQPGVTNQVGAVHPLGRRVVNLMVPCLLGVVPVIGQPTAGLPPGEEITIIKVQEMAELLHGVTKTMEIGLLGTTKEISQTMVVTVHGEVINHQKENQYHPRRNQ.

A helical membrane pass occupies residues 33-53 (VLAAVPQLGAAKVLVLLLLGV).

It is found in the membrane. This is an uncharacterized protein from Saccharomyces cerevisiae (strain ATCC 204508 / S288c) (Baker's yeast).